A 73-amino-acid chain; its full sequence is UPF0435 protein lmo1707 (73 aa).

It belongs to the UPF0435 family.

This is UPF0435 protein lmo1707 from Listeria monocytogenes serovar 1/2a (strain ATCC BAA-679 / EGD-e).